Consider the following 34-residue polypeptide: Brevinin-2GHa (34 aa).

Cys27 and Cys33 are oxidised to a cystine.

Expressed by the skin glands.

Its subcellular location is the secreted. Its function is as follows. Antimicrobial peptide. Active against the Gram-positive bacteria S.aureus FDA209P (MIC=14.9 ug/ml) and B.subtilis ATCC 6633 (MIC&gt;64 ug/ml), but not active against the Gram-negative bacterium E.coli or the fungus C.albicans. This Sylvirana guentheri (Gunther's frog) protein is Brevinin-2GHa.